Reading from the N-terminus, the 133-residue chain is Large ribosomal subunit protein eL32 (133 aa).

The protein belongs to the eukaryotic ribosomal protein eL32 family.

This Dictyostelium discoideum (Social amoeba) protein is Large ribosomal subunit protein eL32 (rpl32).